The following is a 164-amino-acid chain: Putative pre-16S rRNA nuclease (164 aa).

The protein belongs to the YqgF nuclease family.

Its subcellular location is the cytoplasm. Could be a nuclease involved in processing of the 5'-end of pre-16S rRNA. The sequence is that of Putative pre-16S rRNA nuclease from Rhizobium etli (strain CIAT 652).